We begin with the raw amino-acid sequence, 202 residues long: Tetranectin (202 aa).

A signal peptide spans Met-1–Ala-21. 3 disulfides stabilise this stretch: Cys-71–Cys-81, Cys-98–Cys-197, and Cys-173–Cys-189. A C-type lectin domain is found at Val-77–Gln-198.

Homotrimer. As to expression, highest expression in lung, skeletal muscle and heart. Expressed in retina.

Its subcellular location is the secreted. In terms of biological role, tetranectin binds to plasminogen and to isolated kringle 4. May be involved in the packaging of molecules destined for exocytosis. Plays a role in retinal function. This chain is Tetranectin (Clec3b), found in Mus musculus (Mouse).